The sequence spans 537 residues: Apoptosis inhibitor 5-like protein API5 (537 aa).

An ARM-like and Heat-like helical repeats region spans residues 9 to 363 (AEVERLYELG…TTNSLCGYKI (355 aa)). A disordered region spans residues 465–537 (WMEQPKKPAP…GGRGRGWGYR (73 aa)). Residues 474–492 (PTTTGGKRSQPATNGNTPA) are compositionally biased toward polar residues.

It belongs to the API5 family. Interacts with AIP1 and AIP2.

Its subcellular location is the nucleus. Its function is as follows. Putative anti-apoptotic factor involved in the regulation of tapetal programmed cell death (PCD) and degeneration during anther development. Interacts directly with the DEAD-box ATP-dependent RNA helicases AIP1 and AIP2 that form dimers and bind the promoter region of the cysteine protease CP1 involved in tapetum PCD. This is Apoptosis inhibitor 5-like protein API5 from Oryza sativa subsp. japonica (Rice).